We begin with the raw amino-acid sequence, 341 residues long: Undecaprenyl-phosphate 4-deoxy-4-formamido-L-arabinose transferase (341 aa).

Helical transmembrane passes span 235-255 (LSIV…ALIV) and 269-289 (LFVL…GMGL).

This sequence belongs to the glycosyltransferase 2 family.

The protein resides in the cell inner membrane. It carries out the reaction UDP-4-deoxy-4-formamido-beta-L-arabinose + di-trans,octa-cis-undecaprenyl phosphate = 4-deoxy-4-formamido-alpha-L-arabinopyranosyl di-trans,octa-cis-undecaprenyl phosphate + UDP. The protein operates within glycolipid biosynthesis; 4-amino-4-deoxy-alpha-L-arabinose undecaprenyl phosphate biosynthesis; 4-amino-4-deoxy-alpha-L-arabinose undecaprenyl phosphate from UDP-4-deoxy-4-formamido-beta-L-arabinose and undecaprenyl phosphate: step 1/2. Its pathway is bacterial outer membrane biogenesis; lipopolysaccharide biosynthesis. In terms of biological role, catalyzes the transfer of 4-deoxy-4-formamido-L-arabinose from UDP to undecaprenyl phosphate. The modified arabinose is attached to lipid A and is required for resistance to polymyxin and cationic antimicrobial peptides. This is Undecaprenyl-phosphate 4-deoxy-4-formamido-L-arabinose transferase from Pseudomonas fluorescens (strain SBW25).